The following is a 95-amino-acid chain: Costars family protein At4g33640 (95 aa).

Met1 carries the post-translational modification N-acetylmethionine.

It belongs to the costars family.

This Arabidopsis thaliana (Mouse-ear cress) protein is Costars family protein At4g33640.